Reading from the N-terminus, the 212-residue chain is tRNA(Phe) 7-((3-amino-3-carboxypropyl)-4-demethylwyosine(37)-N(4))-methyltransferase 2 (212 aa).

The protein belongs to the TYW3 family.

It catalyses the reaction 4-demethyl-7-[(3S)-3-amino-3-carboxypropyl]wyosine(37) in tRNA(Phe) + S-adenosyl-L-methionine = 7-[(3S)-3-amino-3-carboxypropyl]wyosine(37) in tRNA(Phe) + S-adenosyl-L-homocysteine + H(+). Functionally, S-adenosyl-L-methionine-dependent methyltransferase that acts as a component of the wyosine derivatives biosynthesis pathway. Probably methylates N-4 position of wybutosine-86 to produce wybutosine-72. In Thermococcus kodakarensis (strain ATCC BAA-918 / JCM 12380 / KOD1) (Pyrococcus kodakaraensis (strain KOD1)), this protein is tRNA(Phe) 7-((3-amino-3-carboxypropyl)-4-demethylwyosine(37)-N(4))-methyltransferase 2.